The sequence spans 124 residues: Fluoride-specific ion channel FluC (124 aa).

4 consecutive transmembrane segments (helical) span residues 6 to 26, 34 to 54, 69 to 89, and 101 to 121; these read FAVA…ATWV, FYLA…YLYA, ALII…LDAL, and FAYV…GLAL. Gly76 and Thr79 together coordinate Na(+).

Belongs to the fluoride channel Fluc/FEX (TC 1.A.43) family.

The protein localises to the cell inner membrane. It carries out the reaction fluoride(in) = fluoride(out). Na(+) is not transported, but it plays an essential structural role and its presence is essential for fluoride channel function. Fluoride-specific ion channel. Important for reducing fluoride concentration in the cell, thus reducing its toxicity. The sequence is that of Fluoride-specific ion channel FluC from Stutzerimonas stutzeri (strain A1501) (Pseudomonas stutzeri).